We begin with the raw amino-acid sequence, 86 residues long: U15-lycotoxin-Ls1d (86 aa).

The first 20 residues, 1–20, serve as a signal peptide directing secretion; that stretch reads MNSKIFAVLLLLALLSCVLS. Residues 21–66 enclose the WAP domain; the sequence is DQYCPKSSITACKKMNIRNDCCKDDDCTGGSWCCATPCGNFCKYPT. Disulfide bonds link Cys24–Cys54, Cys32–Cys58, Cys41–Cys53, Cys42–Cys80, and Cys47–Cys62.

This sequence belongs to the venom protein 11 family. 01 (wap-1) subfamily. Post-translationally, contains 5 disulfide bonds. Expressed by the venom gland.

Its subcellular location is the secreted. Its function is as follows. Has antibacterial activity. This chain is U15-lycotoxin-Ls1d, found in Lycosa singoriensis (Wolf spider).